A 201-amino-acid chain; its full sequence is 3-isopropylmalate dehydratase small subunit (201 aa).

The protein belongs to the LeuD family. LeuD type 1 subfamily. Heterodimer of LeuC and LeuD.

The enzyme catalyses (2R,3S)-3-isopropylmalate = (2S)-2-isopropylmalate. Its pathway is amino-acid biosynthesis; L-leucine biosynthesis; L-leucine from 3-methyl-2-oxobutanoate: step 2/4. Catalyzes the isomerization between 2-isopropylmalate and 3-isopropylmalate, via the formation of 2-isopropylmaleate. The sequence is that of 3-isopropylmalate dehydratase small subunit from Shewanella baltica (strain OS223).